Here is a 465-residue protein sequence, read N- to C-terminus: Phosphomannomutase/phosphoglucomutase (465 aa).

Catalysis depends on serine 110, which acts as the Phosphoserine intermediate. Residues serine 110, aspartate 244, aspartate 246, and aspartate 248 each contribute to the Mg(2+) site. Residues glutamate 327, serine 329, and histidine 331 each contribute to the substrate site.

The protein belongs to the phosphohexose mutase family. Monomer. It depends on Mg(2+) as a cofactor.

The catalysed reaction is alpha-D-mannose 1-phosphate = D-mannose 6-phosphate. It catalyses the reaction alpha-D-glucose 1-phosphate = alpha-D-glucose 6-phosphate. It functions in the pathway nucleotide-sugar biosynthesis; GDP-alpha-D-mannose biosynthesis; alpha-D-mannose 1-phosphate from D-fructose 6-phosphate: step 2/2. It participates in bacterial outer membrane biogenesis; lipopolysaccharide biosynthesis. In terms of biological role, the phosphomannomutase activity produces a precursor for alginate polymerization. The alginate layer causes a mucoid phenotype and provides a protective barrier against host immune defenses and antibiotics. Also involved in core-LPS biosynthesis due to its phosphoglucomutase activity. Essential for biofilm production. The polypeptide is Phosphomannomutase/phosphoglucomutase (algC) (Pseudomonas syringae pv. tomato (strain ATCC BAA-871 / DC3000)).